The following is a 637-amino-acid chain: Chaperone protein DnaK (637 aa).

Phosphothreonine; by autocatalysis is present on Thr196. Disordered stretches follow at residues 484–528 (KATG…EVDT) and 598–637 (TEAG…VDDK). Residues 501–528 (SETEIEKMKKDASSHADEDKKKKEEVDT) are compositionally biased toward basic and acidic residues. Over residues 600–620 (AGAPGAAGAAGAAGQGQSASS) the composition is skewed to low complexity. Over residues 621–637 (GKDDEVKNADFEVVDDK) the composition is skewed to basic and acidic residues.

Belongs to the heat shock protein 70 family.

Its function is as follows. Acts as a chaperone. The sequence is that of Chaperone protein DnaK from Chloroherpeton thalassium (strain ATCC 35110 / GB-78).